A 324-amino-acid polypeptide reads, in one-letter code: Phospho-N-acetylmuramoyl-pentapeptide-transferase (324 aa).

The next 10 membrane-spanning stretches (helical) occupy residues 5 to 25, 57 to 77, 81 to 101, 117 to 137, 147 to 167, 176 to 196, 203 to 223, 227 to 247, 250 to 270, and 302 to 322; these read AIVI…PLFI, IMIL…IAGL, TYLL…DDMI, FIGQ…SGFS, WSVD…VGGS, LDGL…VLAW, VAVF…FNAH, VFMG…VAVL, LELL…SVII, and IVVT…YIEV.

Belongs to the glycosyltransferase 4 family. MraY subfamily. Mg(2+) is required as a cofactor.

The protein resides in the cell membrane. The catalysed reaction is UDP-N-acetyl-alpha-D-muramoyl-L-alanyl-gamma-D-glutamyl-meso-2,6-diaminopimeloyl-D-alanyl-D-alanine + di-trans,octa-cis-undecaprenyl phosphate = di-trans,octa-cis-undecaprenyl diphospho-N-acetyl-alpha-D-muramoyl-L-alanyl-D-glutamyl-meso-2,6-diaminopimeloyl-D-alanyl-D-alanine + UMP. It participates in cell wall biogenesis; peptidoglycan biosynthesis. Catalyzes the initial step of the lipid cycle reactions in the biosynthesis of the cell wall peptidoglycan: transfers peptidoglycan precursor phospho-MurNAc-pentapeptide from UDP-MurNAc-pentapeptide onto the lipid carrier undecaprenyl phosphate, yielding undecaprenyl-pyrophosphoryl-MurNAc-pentapeptide, known as lipid I. The chain is Phospho-N-acetylmuramoyl-pentapeptide-transferase from Geobacillus kaustophilus (strain HTA426).